The chain runs to 486 residues: F420-non-reducing hydrogenase iron-sulfur subunit A (486 aa).

Residues Cys-61 and Cys-64 each contribute to the Ni(2+) site.

This sequence belongs to the [NiFe]/[NiFeSe] hydrogenase large subunit family. The F420-non-reducing hydrogenase is composed of three subunits; MvhA, MvhD and MvhG. It forms a complex with the heterodisulfide reductase (Hdr). Ni(2+) is required as a cofactor.

It is found in the cytoplasm. Part of a complex that provides reducing equivalents for heterodisulfide reductase. This Archaeoglobus profundus (strain DSM 5631 / JCM 9629 / NBRC 100127 / Av18) protein is F420-non-reducing hydrogenase iron-sulfur subunit A (mvhA).